The following is a 546-amino-acid chain: Glucose-6-phosphate isomerase (546 aa).

The Proton donor role is filled by Glu-353. Catalysis depends on residues His-384 and Lys-512.

This sequence belongs to the GPI family.

It localises to the cytoplasm. The catalysed reaction is alpha-D-glucose 6-phosphate = beta-D-fructose 6-phosphate. The protein operates within carbohydrate biosynthesis; gluconeogenesis. Its pathway is carbohydrate degradation; glycolysis; D-glyceraldehyde 3-phosphate and glycerone phosphate from D-glucose: step 2/4. Catalyzes the reversible isomerization of glucose-6-phosphate to fructose-6-phosphate. The chain is Glucose-6-phosphate isomerase from Actinobacillus pleuropneumoniae serotype 5b (strain L20).